Here is a 362-residue protein sequence, read N- to C-terminus: MGSSFGHLFRISTFGESHGGGVGVVIDGCPPRLEISEAEIQFELDRRRPGQSKITTPRKEADQCEILSGVVDGKTLDTPIAIVVRNKDQRSQDYSEMQVAYRPSHADATYDAKYGIRAVAGGGRSSARETIGRVAAGAIAKKLLREIAGVEIVGYVKRIKDLEGQIDPETVTLEQVESTIVRCPDEAIAPQMIDLIEAIGREGDSLGGVVECVARRVPRGLGEPVFDKLEADLAKACMSLPATKGFEIGSGFAGTEMTGSEHNDAFYTDEQGQIRTRTNRSGGTQGGISNGENIVIRVAFKPTATIRKEQETVTNSGEATTLAARGRHDPCVLPRAVPMVEAMVALVLCDHLLRQQAQCSWW.

Position 47 (Arg47) interacts with NADP(+). FMN contacts are provided by residues Arg124–Ser126, Gly286, Lys301–Thr305, and Arg327.

Belongs to the chorismate synthase family. In terms of assembly, homotetramer. FMNH2 serves as cofactor.

The enzyme catalyses 5-O-(1-carboxyvinyl)-3-phosphoshikimate = chorismate + phosphate. It functions in the pathway metabolic intermediate biosynthesis; chorismate biosynthesis; chorismate from D-erythrose 4-phosphate and phosphoenolpyruvate: step 7/7. Its function is as follows. Catalyzes the anti-1,4-elimination of the C-3 phosphate and the C-6 proR hydrogen from 5-enolpyruvylshikimate-3-phosphate (EPSP) to yield chorismate, which is the branch point compound that serves as the starting substrate for the three terminal pathways of aromatic amino acid biosynthesis. This reaction introduces a second double bond into the aromatic ring system. This chain is Chorismate synthase, found in Synechococcus sp. (strain ATCC 27144 / PCC 6301 / SAUG 1402/1) (Anacystis nidulans).